We begin with the raw amino-acid sequence, 382 residues long: F-box/kelch-repeat protein KIB1 (382 aa).

An F-box domain is found at 22 to 69 (SKHSILAVDLVRLILERLSFVDFHRARCVSSIWYIASKTVIGVTNPTT). Kelch repeat units lie at residues 73–117 (ILFP…ASSG), 159–209 (VLWV…FKEN), and 259–306 (IVAK…ITVE).

Part of a SCF (SKP1-cullin-F-box) protein ligase complex. Binds directly to several GSK3 family proteins such as SKP1A/ASK1, ASK1/SK11, ASK3/SK12, ASK5/SK13, ASK7/BIN2/SK21, ASK9/SK22 and ASK6/SK23. Interacts with ASK7/BIN2/SK21 in a brassinosteroid (BR)-dependent manner. Expressed in seedlings, leaves, stems, flower buds and flowers.

Its subcellular location is the cytoplasm. The protein localises to the nucleus. The protein resides in the nucleolus. Component of SCF(ASK-cullin-F-box) E3 ubiquitin ligase complexes, which may mediate the ubiquitination and subsequent proteasomal degradation of target proteins. Required for brassinosteroid (BR) signal transduction. Mediates ASK7/BIN2/SK21 inactivation both by competing with substrate binding (e.g. BZR1) and by promoting its ubiquitination and subsequent proteasomal degradation. This Arabidopsis thaliana (Mouse-ear cress) protein is F-box/kelch-repeat protein KIB1.